Reading from the N-terminus, the 194-residue chain is Imidazoleglycerol-phosphate dehydratase (194 aa).

Belongs to the imidazoleglycerol-phosphate dehydratase family.

Its subcellular location is the cytoplasm. The catalysed reaction is D-erythro-1-(imidazol-4-yl)glycerol 3-phosphate = 3-(imidazol-4-yl)-2-oxopropyl phosphate + H2O. Its pathway is amino-acid biosynthesis; L-histidine biosynthesis; L-histidine from 5-phospho-alpha-D-ribose 1-diphosphate: step 6/9. The chain is Imidazoleglycerol-phosphate dehydratase from Bacillus cereus (strain G9842).